A 70-amino-acid chain; its full sequence is MRAIISLILISAMVFSMIAAVPXXEGLQLSEDERGGCLPHNRFCNALSGPRCCSGLKCKELSIWDSICLG.

Positions 1–20 (MRAIISLILISAMVFSMIAA) are cleaved as a signal peptide. Residues 21–34 (VPXXEGLQLSEDER) constitute a propeptide that is removed on maturation. 3 disulfides stabilise this stretch: C37–C53, C44–C58, and C52–C68. L69 bears the Leucine amide mark.

The protein belongs to the neurotoxin 01 (U2-agtx) family. As to expression, expressed by the venom gland.

The protein resides in the secreted. Functionally, insect active toxin causing rapid but reversible paralysis in crickets. No activity shown in mammals. Does not show effect on mammalian voltage-gated calcium channels. The sequence is that of U2-agatoxin-Ao1p from Agelena orientalis (Funnel-web spider).